The primary structure comprises 206 residues: MAVTKKLILASGSPRRVELLAQAGIEPARLMPMDLDETPKRSEHPRSLARRLSAEKAKAALSAITGDPAWDGSYILAADTVVCVGRRILPKPELVSEASSALHLLSGRSHRVYTGICLVTPDRTLRQKVIDTKVRFKRLSTLDIESYLASGQWRGKAGGYGIQGIAGGFVVKLVGSYTNVVGLPLYETVNLLVGEGYDVHDRWLEG.

Asp79 acts as the Proton acceptor in catalysis.

Belongs to the Maf family. YhdE subfamily. It depends on a divalent metal cation as a cofactor.

The protein resides in the cytoplasm. The catalysed reaction is dTTP + H2O = dTMP + diphosphate + H(+). It catalyses the reaction UTP + H2O = UMP + diphosphate + H(+). In terms of biological role, nucleoside triphosphate pyrophosphatase that hydrolyzes dTTP and UTP. May have a dual role in cell division arrest and in preventing the incorporation of modified nucleotides into cellular nucleic acids. The sequence is that of dTTP/UTP pyrophosphatase from Rhizobium meliloti (strain 1021) (Ensifer meliloti).